Consider the following 312-residue polypeptide: Beta-ketoacyl-[acyl-carrier-protein] synthase III 1 (312 aa).

Residues Cys113 and His237 contribute to the active site. The interval 238–242 is ACP-binding; sequence QANIR. The active site involves Asn267.

Belongs to the thiolase-like superfamily. FabH family. As to quaternary structure, homodimer.

The protein localises to the cytoplasm. The enzyme catalyses malonyl-[ACP] + acetyl-CoA + H(+) = 3-oxobutanoyl-[ACP] + CO2 + CoA. Its pathway is lipid metabolism; fatty acid biosynthesis. Catalyzes the condensation reaction of fatty acid synthesis by the addition to an acyl acceptor of two carbons from malonyl-ACP. Catalyzes the first condensation reaction which initiates fatty acid synthesis and may therefore play a role in governing the total rate of fatty acid production. Possesses both acetoacetyl-ACP synthase and acetyl transacylase activities. Its substrate specificity determines the biosynthesis of branched-chain and/or straight-chain of fatty acids. The polypeptide is Beta-ketoacyl-[acyl-carrier-protein] synthase III 1 (Halalkalibacterium halodurans (strain ATCC BAA-125 / DSM 18197 / FERM 7344 / JCM 9153 / C-125) (Bacillus halodurans)).